Consider the following 104-residue polypeptide: Large ribosomal subunit protein bL21 (104 aa).

Belongs to the bacterial ribosomal protein bL21 family. In terms of assembly, part of the 50S ribosomal subunit. Contacts protein L20.

Functionally, this protein binds to 23S rRNA in the presence of protein L20. This is Large ribosomal subunit protein bL21 from Pseudomonas putida (strain GB-1).